A 200-amino-acid chain; its full sequence is Ciliary neurotrophic factor (200 aa).

The protein belongs to the CNTF family. As to expression, nervous system.

It localises to the cytoplasm. Functionally, CNTF is a survival factor for various neuronal cell types. Seems to prevent the degeneration of motor axons after axotomy. In Rattus norvegicus (Rat), this protein is Ciliary neurotrophic factor (Cntf).